Reading from the N-terminus, the 60-residue chain is Large ribosomal subunit protein bL32 (60 aa).

The segment at 1-44 (MAVQQNKKSRSARDMRRSHDALSENALSVEKTTGEVHLRHHVSP) is disordered. The span at 11–22 (SARDMRRSHDAL) shows a compositional bias: basic and acidic residues.

It belongs to the bacterial ribosomal protein bL32 family.

The sequence is that of Large ribosomal subunit protein bL32 from Pseudomonas putida (strain W619).